We begin with the raw amino-acid sequence, 510 residues long: MIWHVQNENFILDSTRIFMKAFHLLLFDGSLIFPECILIFGLILLLMIDSTSDQKDIPWLYFISSTSLVMSITALLFRWREEPMISFSGNFQTNNFNEIFQFLILLCSTLCIPLSVEYIECTEMAITEFLLFVLTATLGGMFLCGANDLITIFVAPECFSLCSYLLSGYTKKDVRSNEATMKYLLMGGASSSILVHGFSWLYGSSGGEIELQEIVNGLINTQMYNSPGISIALIFITVGIGFKLSPAPSHQWTPDVYEGSPTPVVAFLSVTSKVAASASATRIFNIPFYFSSNEWHLLLEILAILSMILGNLIAITQTSMKRMLAYSSIGQIGYVIIGIIVGDSNDGYASMITYMLFYISMNLGTFACIVLFGLRTGTDNIRDYAGLYTKDPFLALSLALCLLSLGGLPPLAGFFGKLYLFWCGWQAGLYFLVLIGLLTSVVSIYYYLKIIKLLMTGRNQEITPHVRNYRRSPLRSNNSIELSMIVCVIASTIPGISMNPIIAIAQDSLF.

The next 13 membrane-spanning stretches (helical) occupy residues 24-44 (LLLF…GLIL), 57-77 (IPWL…ALLF), 99-119 (IFQF…VEYI), 124-144 (MAIT…MFLC), 149-169 (LITI…LSGY), 183-203 (YLLM…WLYG), 227-247 (PGIS…LSPA), 295-315 (WHLL…LIAI), 323-343 (MLAY…IVGD), 354-374 (YMLF…LFGL), 395-415 (ALSL…AGFF), 418-438 (LYLF…IGLL), and 484-504 (MIVC…IIAI).

The protein belongs to the complex I subunit 2 family. As to quaternary structure, NDH is composed of at least 16 different subunits, 5 of which are encoded in the nucleus.

It is found in the plastid. The protein resides in the chloroplast thylakoid membrane. The enzyme catalyses a plastoquinone + NADH + (n+1) H(+)(in) = a plastoquinol + NAD(+) + n H(+)(out). It catalyses the reaction a plastoquinone + NADPH + (n+1) H(+)(in) = a plastoquinol + NADP(+) + n H(+)(out). NDH shuttles electrons from NAD(P)H:plastoquinone, via FMN and iron-sulfur (Fe-S) centers, to quinones in the photosynthetic chain and possibly in a chloroplast respiratory chain. The immediate electron acceptor for the enzyme in this species is believed to be plastoquinone. Couples the redox reaction to proton translocation, and thus conserves the redox energy in a proton gradient. This chain is NAD(P)H-quinone oxidoreductase subunit 2 A, chloroplastic, found in Solanum lycopersicum (Tomato).